A 512-amino-acid polypeptide reads, in one-letter code: Gamma-aminobutyric acid receptor subunit beta-2 (512 aa).

The first 25 residues, 1–25 (MWRVRKRGYFGIWSFPLIIAAVCAQ), serve as a signal peptide directing secretion. At 26–244 (SVNDPSNMSL…SFKLKRNIGY (219 aa)) the chain is on the extracellular side. N-linked (GlcNAc...) asparagine glycans are attached at residues Asn-32 and Asn-104. Tyr-121 serves as a coordination point for histamine. Cys-160 and Cys-174 are oxidised to a cystine. N-linked (GlcNAc...) asparagine glycosylation occurs at Asn-173. Residues 180-181 (SY) and Thr-226 contribute to the histamine site. Positions 181 and 226 each coordinate 4-aminobutanoate. The next 3 helical transmembrane spans lie at 245-266 (FILQTYMPSILITILSWVSFWI), 270-292 (ASAARVALGITTVLTMTTINTHL), and 304-326 (AIDMYLMGCFVFVFMALLEYALV). Over 327–489 (NYIFFGRGPQ…DLTDVNAIDR (163 aa)) the chain is Cytoplasmic. Phosphotyrosine is present on Tyr-441. Residues 490 to 511 (WSRIFFPVVFSFFNIVYWLYYV) form a helical membrane-spanning segment.

Belongs to the ligand-gated ion channel (TC 1.A.9) family. Gamma-aminobutyric acid receptor (TC 1.A.9.5) subfamily. GABRB2 sub-subfamily. As to quaternary structure, heteropentamer, formed by a combination of alpha (GABRA1-6), beta (GABRB1-3), gamma (GABRG1-3), delta (GABRD), epsilon (GABRE), rho (GABRR1-3), pi (GABRP) and theta (GABRQ) chains, each subunit exhibiting distinct physiological and pharmacological properties. Interacts with UBQLN1. May interact with KIF21B. Identified in a complex of 720 kDa composed of LHFPL4, NLGN2, GABRA1, GABRB2, GABRG2 and GABRB3. Glycosylated.

The protein resides in the postsynaptic cell membrane. Its subcellular location is the cell membrane. It localises to the cytoplasmic vesicle. It catalyses the reaction chloride(in) = chloride(out). Its activity is regulated as follows. Allosterically activated by benzodiazepines and the anesthetic etomidate. Inhibited by the antagonist bicuculline. Potentiated by histamine. Its function is as follows. Beta subunit of the heteropentameric ligand-gated chloride channel gated by gamma-aminobutyric acid (GABA), a major inhibitory neurotransmitter in the brain. GABA-gated chloride channels, also named GABA(A) receptors (GABAAR), consist of five subunits arranged around a central pore and contain GABA active binding site(s) located at the alpha and beta subunit interface(s). When activated by GABA, GABAARs selectively allow the flow of chloride anions across the cell membrane down their electrochemical gradient. Chloride influx into the postsynaptic neuron following GABAAR opening decreases the neuron ability to generate a new action potential, thereby reducing nerve transmission. GABAARs containing alpha-1 and beta-2 or -3 subunits exhibit synaptogenic activity; the gamma-2 subunit being necessary but not sufficient to induce rapid synaptic contacts formation. Extrasynaptic beta-2 receptors contribute to the tonic GABAergic inhibition. Beta-containing GABAARs can simultaneously bind GABA and histamine where histamine binds at the interface of two neighboring beta subunits, which may be involved in the regulation of sleep and wakefulness. The protein is Gamma-aminobutyric acid receptor subunit beta-2 of Mus musculus (Mouse).